The primary structure comprises 699 residues: Conditioned medium factor (699 aa).

Residues 1–18 form the signal peptide; it reads MRLLLLLILIITINFSYG. Asn130, Asn283, Asn346, and Asn430 each carry an N-linked (GlcNAc...) asparagine glycan. The interval 680–699 is disordered; that stretch reads SPQQTTNTEYNKEMSSNSVW.

Post-translationally, N- and O-glycosylated. The N-terminus is blocked.

Functionally, involved in cell density sensing and might synchronize the onset of development by triggering aggregation when a majority of the cells in a given area have starved. The sequence is that of Conditioned medium factor (cmfA) from Dictyostelium discoideum (Social amoeba).